We begin with the raw amino-acid sequence, 276 residues long: Diaminopimelate epimerase (276 aa).

Substrate is bound by residues Asn13, Gln46, and Asn66. Cys75 acts as the Proton donor in catalysis. Substrate is bound by residues 76–77 (GN), Asn159, Asn192, and 210–211 (ER). Cys219 serves as the catalytic Proton acceptor. Residue 220-221 (GT) coordinates substrate.

It belongs to the diaminopimelate epimerase family. As to quaternary structure, homodimer.

The protein localises to the cytoplasm. The catalysed reaction is (2S,6S)-2,6-diaminopimelate = meso-2,6-diaminopimelate. It participates in amino-acid biosynthesis; L-lysine biosynthesis via DAP pathway; DL-2,6-diaminopimelate from LL-2,6-diaminopimelate: step 1/1. In terms of biological role, catalyzes the stereoinversion of LL-2,6-diaminopimelate (L,L-DAP) to meso-diaminopimelate (meso-DAP), a precursor of L-lysine and an essential component of the bacterial peptidoglycan. The chain is Diaminopimelate epimerase from Chromobacterium violaceum (strain ATCC 12472 / DSM 30191 / JCM 1249 / CCUG 213 / NBRC 12614 / NCIMB 9131 / NCTC 9757 / MK).